The chain runs to 309 residues: Elongation factor Ts (309 aa).

Residues 82-85 (TDFV) form an involved in Mg(2+) ion dislocation from EF-Tu region.

Belongs to the EF-Ts family.

The protein localises to the cytoplasm. Functionally, associates with the EF-Tu.GDP complex and induces the exchange of GDP to GTP. It remains bound to the aminoacyl-tRNA.EF-Tu.GTP complex up to the GTP hydrolysis stage on the ribosome. The chain is Elongation factor Ts from Rickettsia bellii (strain OSU 85-389).